Consider the following 360-residue polypeptide: tRNA-specific 2-thiouridylase MnmA (360 aa).

Residues 9–16 and L35 contribute to the ATP site; that span reads AMSGGVDS. C104 functions as the Nucleophile in the catalytic mechanism. A disulfide bridge connects residues C104 and C197. Position 128 (G128) interacts with ATP. The interval 147–149 is interaction with tRNA; that stretch reads KDQ. C197 acts as the Cysteine persulfide intermediate in catalysis.

Belongs to the MnmA/TRMU family.

The protein resides in the cytoplasm. The enzyme catalyses S-sulfanyl-L-cysteinyl-[protein] + uridine(34) in tRNA + AH2 + ATP = 2-thiouridine(34) in tRNA + L-cysteinyl-[protein] + A + AMP + diphosphate + H(+). In terms of biological role, catalyzes the 2-thiolation of uridine at the wobble position (U34) of tRNA, leading to the formation of s(2)U34. In Salinispora arenicola (strain CNS-205), this protein is tRNA-specific 2-thiouridylase MnmA.